The sequence spans 641 residues: Chaperone protein DnaK 2 (641 aa).

Thr199 carries the phosphothreonine; by autocatalysis modification. Positions 601–616 (MAQQQAQAQHAQSSQQ) are enriched in low complexity. The tract at residues 601-641 (MAQQQAQAQHAQSSQQTNDTTGQSSTDDDVFEAEFEEVKDK) is disordered. The segment covering 626–635 (TDDDVFEAEF) has biased composition (acidic residues).

This sequence belongs to the heat shock protein 70 family.

Its function is as follows. Acts as a chaperone. The sequence is that of Chaperone protein DnaK 2 from Photobacterium profundum (strain SS9).